The primary structure comprises 210 residues: High mobility group protein B2 (210 aa).

K3 is modified (N6-acetyllysine). The HMG box 1 DNA-binding region spans 9-79; sequence PRGKMSSYAF…RYDREMKNYV (71 aa). C23 carries the cysteine sulfonic acid (-SO3H); alternate modification. Cysteines 23 and 45 form a disulfide. K30 bears the N6-acetyllysine mark. Phosphoserine is present on S35. At K43 the chain carries N6-acetyllysine. C45 carries the cysteine sulfonic acid (-SO3H); alternate modification. The span at 51–76 shows a compositional bias: basic and acidic residues; it reads TMSAKEKSKFEDLAKSDKARYDREMK. A disordered region spans residues 51–102; the sequence is TMSAKEKSKFEDLAKSDKARYDREMKNYVPPKGDKKGKKKDPNAPKRPPSAF. K90 is subject to N6-acetyllysine. The HMG box 2 DNA-binding region spans 95-163; that stretch reads PKRPPSAFFL…KYEKDIAAYR (69 aa). At S100 the chain carries Phosphoserine. Residue C106 is modified to Cysteine sulfonic acid (-SO3H). Residues K114 and K141 each carry the N6-acetyllysine modification. The segment covering 162–172 has biased composition (basic and acidic residues); it reads YRAKGKSEVGK. The segment at 162 to 210 is disordered; it reads YRAKGKSEVGKKGPGRPTGSKKKNEPEDEEEEEEEEDDEDEEEEDEDEE. Residues 165–180 form a required for chemotactic activity region; it reads KGKSEVGKKGPGRPTG. Positions 187–210 are enriched in acidic residues; sequence PEDEEEEEEEEDDEDEEEEDEDEE.

It belongs to the HMGB family. In terms of assembly, interacts with POU2F2, POU2F1 and POU3F1. Component of the RAG complex composed of core components RAG1 and RAG2, and associated component HMGB1 or HMGB2. Component of the SET complex, composed of at least ANP32A, APEX1, HMGB2, NME1, SET and TREX1. Directly interacts with SET. Interacts with LEF1. Post-translationally, reduction/oxidation of cysteine residues Cys-23, Cys-45 and Cys-106 and a possible intramolecular disulfide bond involving Cys-23 and Cys-45 give rise to different redox forms with specific functional activities in various cellular compartments: 1- fully reduced HMGB2 (HMGB2C23hC45hC106h), 2- disulfide HMGB2 (HMGB2C23-C45C106h) and 3- sulfonyl HMGB2 (HMGB2C23soC45soC106so).

It localises to the nucleus. The protein localises to the chromosome. It is found in the cytoplasm. Its subcellular location is the secreted. In terms of biological role, multifunctional protein with various roles in different cellular compartments. May act in a redox sensitive manner. In the nucleus is an abundant chromatin-associated non-histone protein involved in transcription, chromatin remodeling and V(D)J recombination and probably other processes. Binds DNA with a preference to non-canonical DNA structures such as single-stranded DNA. Can bent DNA and enhance DNA flexibility by looping thus providing a mechanism to promote activities on various gene promoters by enhancing transcription factor binding and/or bringing distant regulatory sequences into close proximity. Involved in V(D)J recombination by acting as a cofactor of the RAG complex: acts by stimulating cleavage and RAG protein binding at the 23 bp spacer of conserved recombination signal sequences (RSS). Proposed to be involved in the innate immune response to nucleic acids by acting as a cytoplasmic promiscuous immunogenic DNA/RNA sensor which cooperates with subsequent discriminative sensing by specific pattern recognition receptors. In the extracellular compartment acts as a chemokine. Promotes proliferation and migration of endothelial cells implicating AGER/RAGE. Has antimicrobial activity in gastrointestinal epithelial tissues. Involved in inflammatory response to antigenic stimulus coupled with pro-inflammatory activity. May play a role in germ cell differentiation. Involved in modulation of neurogenesis probably by regulation of neural stem proliferation. Involved in articular cartilage surface maintenance implicating LEF1 and the Wnt/beta-catenin pathway. The polypeptide is High mobility group protein B2 (Hmgb2) (Rattus norvegicus (Rat)).